An 87-amino-acid chain; its full sequence is Spore morphogenesis and germination protein YwcE (87 aa).

The next 3 membrane-spanning stretches (helical) occupy residues methionine 1 to leucine 21, valine 26 to threonine 46, and leucine 56 to tyrosine 76.

This sequence belongs to the YwcE family.

Its subcellular location is the cell membrane. The protein resides in the spore membrane. It localises to the spore outer membrane. In terms of biological role, required for proper spore morphogenesis. Important for spore germination. The chain is Spore morphogenesis and germination protein YwcE (ywcE) from Bacillus subtilis (strain 168).